Reading from the N-terminus, the 530-residue chain is Pre-mRNA-splicing factor PRP9 (530 aa).

A Matrin-type 1 zinc finger spans residues 280 to 310 (IYCPFCSRWFKTSSVFESHLVGKIHKKNESK). Residues 367 to 388 (DSTEKEGAEQVDGEQRDGQLQE) form a disordered region. Residues 368–388 (STEKEGAEQVDGEQRDGQLQE) show a composition bias toward basic and acidic residues. A Matrin-type 2 zinc finger spans residues 421–452 (YRCEICSNKVYNGRRTFERHFNEERHIYHLRC). The disordered stretch occupies residues 488-516 (AVPPKPNPSQLKVPTELELEEEDEEGNVM). The span at 504 to 513 (LELEEEDEEG) shows a compositional bias: acidic residues.

Belongs to the SF3A3 family. Belongs to the CWC complex (or CEF1-associated complex), a spliceosome sub-complex reminiscent of a late-stage spliceosome composed of the U2, U5 and U6 snRNAs and at least BUD13, BUD31, BRR2, CDC40, CEF1, CLF1, CUS1, CWC2, CWC15, CWC21, CWC22, CWC23, CWC24, CWC25, CWC27, ECM2, HSH155, IST3, ISY1, LEA1, MSL1, NTC20, PRP8, PRP9, PRP11, PRP19, PRP21, PRP22, PRP45, PRP46, SLU7, SMB1, SMD1, SMD2, SMD3, SMX2, SMX3, SNT309, SNU114, SPP2, SYF1, SYF2, RSE1 and YJU2.

The protein resides in the nucleus. Functionally, mRNA splicing factors, PRP9, PRP11, and PRP21, are necessary for binding of the U2 snRNP to the pre-mRNA in an early step of spliceosome assembly. The polypeptide is Pre-mRNA-splicing factor PRP9 (PRP9) (Saccharomyces cerevisiae (strain ATCC 204508 / S288c) (Baker's yeast)).